Consider the following 158-residue polypeptide: MAKKPDNPNYKVIAENRRARFDYAIESDLEVGIILEGSEVKSLRQGQSNIAESYAEVKEGELWLVNSYIAPYVQAKTFGHEEKRRRKMLVSRKELSKLWNATQREGMTLVPIVMYFNHKGLVKLKIGIAKGKKAQDKRETSAKRDWNRQKARLLKQNG.

Residues Lys-133–Arg-148 are compositionally biased toward basic and acidic residues. A disordered region spans residues Lys-133–Gly-158. Residues Gln-149–Gly-158 are compositionally biased toward basic residues.

This sequence belongs to the SmpB family.

It localises to the cytoplasm. Its function is as follows. Required for rescue of stalled ribosomes mediated by trans-translation. Binds to transfer-messenger RNA (tmRNA), required for stable association of tmRNA with ribosomes. tmRNA and SmpB together mimic tRNA shape, replacing the anticodon stem-loop with SmpB. tmRNA is encoded by the ssrA gene; the 2 termini fold to resemble tRNA(Ala) and it encodes a 'tag peptide', a short internal open reading frame. During trans-translation Ala-aminoacylated tmRNA acts like a tRNA, entering the A-site of stalled ribosomes, displacing the stalled mRNA. The ribosome then switches to translate the ORF on the tmRNA; the nascent peptide is terminated with the 'tag peptide' encoded by the tmRNA and targeted for degradation. The ribosome is freed to recommence translation, which seems to be the essential function of trans-translation. The sequence is that of SsrA-binding protein from Jannaschia sp. (strain CCS1).